Reading from the N-terminus, the 135-residue chain is MLKTLPPTIREKKRYISFKIIYNNELSGGEVVNLIRSSLINYYGVWGSSKCNPWLIDYTHPKGLLRITREEVDFVKSALISINEYKKNPINIIILGVSGTIKKSREKFLKVPHEKYYKVIQRRKKENSYKNRLRK.

This sequence belongs to the eukaryotic/archaeal RNase P protein component 2 family. As to quaternary structure, consists of a catalytic RNA component and at least 4-5 protein subunits.

The protein localises to the cytoplasm. The catalysed reaction is Endonucleolytic cleavage of RNA, removing 5'-extranucleotides from tRNA precursor.. Its function is as follows. Part of ribonuclease P, a protein complex that generates mature tRNA molecules by cleaving their 5'-ends. This chain is Ribonuclease P protein component 2, found in Methanococcus aeolicus (strain ATCC BAA-1280 / DSM 17508 / OCM 812 / Nankai-3).